A 922-amino-acid chain; its full sequence is Cell cycle and apoptosis regulator protein 2 (922 aa).

A disordered region spans residues 1–39; the sequence is MSQFKRQRINPLPGGRNFSGAASTSLLGPPPGLLTPPVA. The residue at position 35 (Thr35) is a Phosphothreonine. Lys112 is subject to N6-acetyllysine; by KAT8. An N6-methyllysine modification is found at Lys123. Position 124 is a phosphoserine (Ser124). Disordered stretches follow at residues 178–219, 280–307, 446–508, and 567–638; these read LNRF…KPRH, RIQVSSEKEAAPDTGAEPSPEDSDPTYS, KATE…EPAV, and VSPP…RGEA. Arg180 carries the post-translational modification Omega-N-methylarginine. The segment covering 188-200 has biased composition (basic and acidic residues); it reads GRLDQGRSDDYDS. Position 215 is an N6-acetyllysine; by KAT8 (Lys215). The span at 473–491 shows a compositional bias: polar residues; it reads QADTSKQNTETMEATTQQD. The residue at position 483 (Thr483) is a Phosphothreonine. Ser568 carries the phosphoserine modification. Basic and acidic residues predominate over residues 571-601; that stretch reads EPEKEEAAKEDAVKEEEAVKEEAVKVSKDEV. A coiled-coil region spans residues 573-596; sequence EKEEAAKEDAVKEEEAVKEEAVKV. Lys590 participates in a covalent cross-link: Glycyl lysine isopeptide (Lys-Gly) (interchain with G-Cter in SUMO2 and SUMO3); alternate. Lys590 is covalently cross-linked (Glycyl lysine isopeptide (Lys-Gly) (interchain with G-Cter in SUMO2); alternate). The tract at residues 609–669 is interaction with MCC; sequence ESDSPLKEDG…DEFAGAKLEE (61 aa). 5 positions are modified to phosphoserine: Ser612, Ser626, Ser674, Ser677, and Ser680. Tyr684 carries the phosphotyrosine modification. Residues Ser686 and Ser807 each carry the phosphoserine modification. The interaction with NR1D1 stretch occupies residues 703-922; the sequence is DCLLAFVFFD…VEKEEPTPSN (220 aa). The stretch at 828–898 forms a coiled coil; it reads LENKIHTLEL…QDFRRRLTPL (71 aa). The residue at position 896 (Thr896) is a Phosphothreonine.

Component of the DBIRD complex. Interacts with ZNF326/ZIRD; the interaction is direct. Interacts (via N-terminus) with SIRT1, which inhibits the deacetylation of substrates. Interacts (via N-terminus) with SUV39H1; this interaction abolishes the interaction with SIRT1. Component of a nuclear receptor-mediated transcription complex composed of at least ZNF335, CCAR2 and EMSY; the complex stimulates the transcription of nuclear receptor target genes such as SOX9 and HOXA1. Within the complex interacts with EMSY and interacts with ZNF335 (via C-terminus). Components of this complex may associate with components of a histone methylation complex to form a complex at least composed of ZNF335, HCFC1, CCAR2, EMSY, MKI67, RBBP5, ASH2L and WDR5. Within this complex, interacts with ASH2L. Interacts with NR1D1. Interacts (via N-terminus) with ESR1 and ESR2. Interacts (via N-terminus) with HDAC3 (via C-terminus). Interacts with HDAC1 and MED2F. Interacts with MCC. Interacts (via N-terminus) with NR1H2 and NR1H3 in a ligand-independent manner. Interacts with CSNK2A1. Interacts (via N-terminus) with p53/TP53. Interacts (via N-terminus) with BRCA1 (via the BRCT domains). Interacts (via N-terminus) with CHEK2 (via protein kinase domain). Interacts with PSEM3. Interacts (via N-terminus) with PSIA3 and SENP1. The sumoylated form shows a preferential interaction with SIRT1 as compared to its unmodified form. Interacts with CECR2; may form part of the CERF-1 and/or CEF-5 ISWI chromatin remodeling complexes in embryonic stem cells. In terms of processing, acetylation at Lys-112 and Lys-215 by KAT8 prevents inhibitory binding to SIRT1 and increases its deacetylase activity. Genotoxic stress induces its sumoylation and sumoylation promotes the SIRT1-CCAR2 interaction which in turn inhibits SIRT1-mediated deacetylation of p53/TP53. Sumoylation leads to transcriptional activation of p53/TP53 by sequestering SIRT1 from p53/TP53. Desumoylated by SENP1.

It is found in the nucleus. It localises to the cytoplasm. The protein localises to the cytoskeleton. The protein resides in the spindle. Functionally, core component of the DBIRD complex, a multiprotein complex that acts at the interface between core mRNP particles and RNA polymerase II (RNAPII) and integrates transcript elongation with the regulation of alternative splicing: the DBIRD complex affects local transcript elongation rates and alternative splicing of a large set of exons embedded in (A + T)-rich DNA regions. Inhibits SIRT1 deacetylase activity leading to increasing levels of p53/TP53 acetylation and p53-mediated apoptosis. Inhibits SUV39H1 methyltransferase activity. Mediates ligand-dependent transcriptional activation by nuclear hormone receptors. Plays a critical role in maintaining genomic stability and cellular integrity following UV-induced genotoxic stress. Regulates the circadian expression of the core clock components NR1D1 and BMAL1. Enhances the transcriptional repressor activity of NR1D1 through stabilization of NR1D1 protein levels by preventing its ubiquitination and subsequent degradation. Represses the ligand-dependent transcriptional activation function of ESR2. Acts as a regulator of PCK1 expression and gluconeogenesis by a mechanism that involves, at least in part, both NR1D1 and SIRT1. Negatively regulates the deacetylase activity of HDAC3 and can alter its subcellular localization. Positively regulates the beta-catenin pathway (canonical Wnt signaling pathway) and is required for MCC-mediated repression of the beta-catenin pathway. Represses ligand-dependent transcriptional activation function of NR1H2 and NR1H3 and inhibits the interaction of SIRT1 with NR1H3. Plays an important role in tumor suppression through p53/TP53 regulation; stabilizes p53/TP53 by affecting its interaction with ubiquitin ligase MDM2. Represses the transcriptional activator activity of BRCA1. Inhibits SIRT1 in a CHEK2 and PSEM3-dependent manner and inhibits the activity of CHEK2 in vitro. The polypeptide is Cell cycle and apoptosis regulator protein 2 (Ccar2) (Mus musculus (Mouse)).